A 177-amino-acid polypeptide reads, in one-letter code: Thymidine kinase (177 aa).

Gly-11 to Ser-18 is a binding site for ATP. Glu-83 acts as the Proton acceptor in catalysis. Phe-113 lines the substrate pocket. The Zn(2+) site is built by Cys-138 and Cys-141. Ile-157 to Gly-161 serves as a coordination point for substrate. Cys-170 and Cys-173 together coordinate Zn(2+).

This sequence belongs to the thymidine kinase family. Homotetramer. Two molecules of substrate bind to each enzyme tetramer.

It catalyses the reaction thymidine + ATP = dTMP + ADP + H(+). Phosphorylates thymidine and thymidine analogs, such as azidothymidine (AZT). Part of the salvage pathway for pyrimidine deoxyribonucleotide synthesis. This is Thymidine kinase (OPG101) from Variola virus (isolate Human/India/Ind3/1967) (VARV).